The primary structure comprises 203 residues: Large ribosomal subunit protein eL15 (203 aa).

The tract at residues 160–186 (ESRGLTSTGKRSRGLNKGHRYNKTRAG) is disordered. The segment covering 169-186 (KRSRGLNKGHRYNKTRAG) has biased composition (basic residues).

The protein belongs to the eukaryotic ribosomal protein eL15 family. Component of the large ribosomal subunit (LSU). Mature N.crassa ribosomes consist of a small (40S) and a large (60S) subunit. The 40S small subunit contains 1 molecule of ribosomal RNA (18S rRNA) and at least 32 different proteins. The large 60S subunit contains 3 rRNA molecules (26S, 5.8S and 5S rRNA) and at least 42 different proteins.

The protein localises to the cytoplasm. Functionally, component of the ribosome, a large ribonucleoprotein complex responsible for the synthesis of proteins in the cell. The small ribosomal subunit (SSU) binds messenger RNAs (mRNAs) and translates the encoded message by selecting cognate aminoacyl-transfer RNA (tRNA) molecules. The large subunit (LSU) contains the ribosomal catalytic site termed the peptidyl transferase center (PTC), which catalyzes the formation of peptide bonds, thereby polymerizing the amino acids delivered by tRNAs into a polypeptide chain. The nascent polypeptides leave the ribosome through a tunnel in the LSU and interact with protein factors that function in enzymatic processing, targeting, and the membrane insertion of nascent chains at the exit of the ribosomal tunnel. In Neurospora crassa (strain ATCC 24698 / 74-OR23-1A / CBS 708.71 / DSM 1257 / FGSC 987), this protein is Large ribosomal subunit protein eL15 (rpl-15).